A 362-amino-acid polypeptide reads, in one-letter code: UDP-N-acetylglucosamine--N-acetylmuramyl-(pentapeptide) pyrophosphoryl-undecaprenol N-acetylglucosamine transferase (362 aa).

UDP-N-acetyl-alpha-D-glucosamine-binding positions include 14–16 (TGG), asparagine 126, arginine 166, serine 193, and glutamine 294.

Belongs to the glycosyltransferase 28 family. MurG subfamily.

Its subcellular location is the cell inner membrane. It carries out the reaction di-trans,octa-cis-undecaprenyl diphospho-N-acetyl-alpha-D-muramoyl-L-alanyl-D-glutamyl-meso-2,6-diaminopimeloyl-D-alanyl-D-alanine + UDP-N-acetyl-alpha-D-glucosamine = di-trans,octa-cis-undecaprenyl diphospho-[N-acetyl-alpha-D-glucosaminyl-(1-&gt;4)]-N-acetyl-alpha-D-muramoyl-L-alanyl-D-glutamyl-meso-2,6-diaminopimeloyl-D-alanyl-D-alanine + UDP + H(+). Its pathway is cell wall biogenesis; peptidoglycan biosynthesis. Cell wall formation. Catalyzes the transfer of a GlcNAc subunit on undecaprenyl-pyrophosphoryl-MurNAc-pentapeptide (lipid intermediate I) to form undecaprenyl-pyrophosphoryl-MurNAc-(pentapeptide)GlcNAc (lipid intermediate II). This is UDP-N-acetylglucosamine--N-acetylmuramyl-(pentapeptide) pyrophosphoryl-undecaprenol N-acetylglucosamine transferase from Paracoccus denitrificans (strain Pd 1222).